The chain runs to 190 residues: MSSFRSMLGVPPSTASTQDSVLVIIDAQGEYAEGKLKISNIEASRPNISSLLEKYRAANAPIVHVVHETPAGAPLFTQGTKLAEIFDELTPKEGEAVVTKHHPGSFADTNLQEILEKSGKKKIVLVGYMAHVCVSTTARQGAQRGWDVIVAEDAVGDRDIPGVDAAQLVKVALAEIADVFGTLVSSKDIN.

Catalysis depends on residues Asp26, Lys100, and Cys133.

Belongs to the isochorismatase family.

Its subcellular location is the secreted. It is found in the host cytoplasm. The protein resides in the host nucleus. The catalysed reaction is isochorismate + H2O = (2S,3S)-2,3-dihydroxy-2,3-dihydrobenzoate + pyruvate. Secreted isochorismatase required for full virulence of V.dahliae. Suppresses salicylate-mediated innate immunity of the host by disrupting the plant salicylate metabolism pathway via hydrolysis of its isochorismate precursor. The chain is Secreted isochorismatase effector Isc1 from Verticillium dahliae (strain VdLs.17 / ATCC MYA-4575 / FGSC 10137) (Verticillium wilt).